A 178-amino-acid polypeptide reads, in one-letter code: Translation initiation factor IF-3 (178 aa).

The disordered stretch occupies residues 1–20 (MRRPFKAAAPTKDGPRSNRD).

Belongs to the IF-3 family. As to quaternary structure, monomer.

It localises to the cytoplasm. Functionally, IF-3 binds to the 30S ribosomal subunit and shifts the equilibrium between 70S ribosomes and their 50S and 30S subunits in favor of the free subunits, thus enhancing the availability of 30S subunits on which protein synthesis initiation begins. In Mesorhizobium japonicum (strain LMG 29417 / CECT 9101 / MAFF 303099) (Mesorhizobium loti (strain MAFF 303099)), this protein is Translation initiation factor IF-3.